Consider the following 217-residue polypeptide: MRQFIPMRRVLAVATLGALFWAAPASWAAAPPEAASCIACHGAGGMGNPAAGYPRLAGLPEQYLADQLRYFADGARNNAVMSGMAKPLSAAQVTALATYYSKLKPSGKPAPMPTGAAAAEGERLALRGDWEKGIPACIRCHGPGAVGVGENFPALVGQSAAYIEAQIKAWKDGSRSGDPLGLMHTVALRMTDAQTQAVAQWLAAQPLSPTKSASAKH.

The first 28 residues, 1-28 (MRQFIPMRRVLAVATLGALFWAAPASWA), serve as a signal peptide directing secretion. 2 Cytochrome c domains span residues 29-104 (AAPP…SKLK) and 116-206 (AAAA…AAQP). Residues Cys37, Cys40, His41, Cys137, Cys140, and His141 each contribute to the heme c site.

Binds 2 heme c groups covalently per subunit.

Its function is as follows. Acts as an electron acceptor for the thiosulfate dehydrogenase TsdA. The protein is Thiosulfate dehydrogenase electron acceptor (tsdB) of Thiomonas intermedia (strain K12) (Thiobacillus intermedius).